A 55-amino-acid polypeptide reads, in one-letter code: Lantibiotic nisin-U (55 aa).

Positions 1-24 are excised as a propeptide; sequence MNNEDFNLDLIKISKENNSGASPR. Thr-26 is subject to 2,3-didehydrobutyrine. A cross-link (lanthionine (Ser-Cys)) is located at residues 27-31; that stretch reads SKSLC. The residue at position 29 (Ser-29) is a 2,3-didehydroalanine (Ser). 4 cross-links (beta-methyllanthionine (Thr-Cys)) span residues 32–35, 37–43, 47–50, and 49–52; these read TPGC, TGILMTC, TATC, and TCGC. Position 42 is a 2,3-didehydrobutyrine (Thr-42).

Post-translationally, maturation of lantibiotics involves the enzymatic conversion of Thr, and Ser into dehydrated AA and the formation of thioether bonds with cysteine. This is followed by membrane translocation and cleavage of the modified precursor.

The protein localises to the secreted. Functionally, lanthionine-containing peptide antibiotic (lantibiotic) active on Gram-positive bacteria. The bactericidal activity of lantibiotics is based on depolarization of energized bacterial cytoplasmic membranes, initiated by the formation of aqueous transmembrane pores. In Streptococcus uberis, this protein is Lantibiotic nisin-U (nsuA).